The primary structure comprises 329 residues: Phosphate acyltransferase (329 aa).

Belongs to the PlsX family. As to quaternary structure, homodimer. Probably interacts with PlsY.

Its subcellular location is the cytoplasm. The catalysed reaction is a fatty acyl-[ACP] + phosphate = an acyl phosphate + holo-[ACP]. The protein operates within lipid metabolism; phospholipid metabolism. In terms of biological role, catalyzes the reversible formation of acyl-phosphate (acyl-PO(4)) from acyl-[acyl-carrier-protein] (acyl-ACP). This enzyme utilizes acyl-ACP as fatty acyl donor, but not acyl-CoA. This chain is Phosphate acyltransferase, found in Campylobacter concisus (strain 13826).